The primary structure comprises 861 residues: Integrator complex subunit 6-like (861 aa).

The region spanning 3 to 227 (ILLFLIDTSA…QCLESLVQKV (225 aa)) is the VWFA domain. At Ser617 the chain carries Phosphoserine.

The sequence is that of Integrator complex subunit 6-like (Ints6l) from Mus musculus (Mouse).